A 1857-amino-acid chain; its full sequence is Chitin synthase Y (1857 aa).

Positions 1 to 22 are disordered; that stretch reads MVGPSPAGTVPSHAQSSLPSLP. Residues 1–788 form the Myosin motor domain; the sequence is MVGPSPAGTV…CWADLAKVGE (788 aa). 102–109 is an ATP binding site; the sequence is GESGAGKT. Residues 601 to 653 form a disordered region; it reads SSKPLRMPSMARRKASPASRLTFDAPTAEEPEDNESYGGSTAKSSGRRKSAMS. N-linked (GlcNAc...) asparagine glycosylation occurs at N634. Residues 668–692 are actin-binding; that stretch reads LEIVNKCLSSPSLNPYFIFCLKPND. The next 2 membrane-spanning stretches (helical) occupy residues 898–918 and 937–957; these read WMAI…RLFG and LIIW…PGLV. In terms of domain architecture, Cytochrome b5 heme-binding spans 961 to 1020; the sequence is QHVYSAAELESHNGKNGHDSYIAIRGVVFDLDKFMPRHYPDIVPQSSLKKYAGMDATGLF. N-linked (GlcNAc...) asparagine glycans are attached at residues N1047 and N1072. Residues 1209-1229 form a helical membrane-spanning segment; it reads FILAISILICAVVIFKFAAAL. N1572 carries N-linked (GlcNAc...) asparagine glycosylation. 3 consecutive transmembrane segments (helical) span residues 1603–1623, 1630–1650, and 1657–1677; these read LLST…IVWL, IPWT…LIFI, and MIGW…ALPF. Residues 1799–1854 form the DEK-C domain; it reads LPSDDAILAEIREILRTADLMTVTKKSIKQELERRFGVNLDAKRPYINSATEAVLS.

In the N-terminal section; belongs to the TRAFAC class myosin-kinesin ATPase superfamily. Myosin family. This sequence in the C-terminal section; belongs to the chitin synthase family. Class V subfamily.

The protein localises to the cell membrane. The protein resides in the cell septum. It localises to the cell tip. It catalyses the reaction [(1-&gt;4)-N-acetyl-beta-D-glucosaminyl](n) + UDP-N-acetyl-alpha-D-glucosamine = [(1-&gt;4)-N-acetyl-beta-D-glucosaminyl](n+1) + UDP + H(+). Polymerizes chitin, a structural polymer of the cell wall and septum, by transferring the sugar moiety of UDP-GlcNAc to the non-reducing end of the growing chitin polymer. Specifically involved in hyphal elongation and new cell wall formation. The protein is Chitin synthase Y of Aspergillus oryzae (strain ATCC 42149 / RIB 40) (Yellow koji mold).